The following is a 348-amino-acid chain: 4-hydroxyphenylpyruvate dioxygenase (348 aa).

VOC domains follow at residues 11–141 (GFAF…ITSP) and 151–303 (AIDH…IFTE). 3 residues coordinate Fe cation: His154, His232, and Glu312.

This sequence belongs to the 4HPPD family. Fe cation is required as a cofactor.

It carries out the reaction 3-(4-hydroxyphenyl)pyruvate + O2 = homogentisate + CO2. Catalyzes the transformation of p-hydroxyphenylpyruvate into HGA. Has hemolytic and brown pigment production activity. The polypeptide is 4-hydroxyphenylpyruvate dioxygenase (lly) (Legionella pneumophila subsp. pneumophila (strain Philadelphia 1 / ATCC 33152 / DSM 7513)).